Consider the following 218-residue polypeptide: Small ribosomal subunit protein mS34 (218 aa).

This sequence belongs to the mitochondrion-specific ribosomal protein mS34 family. As to quaternary structure, component of the mitochondrial ribosome small subunit (28S) which comprises a 12S rRNA and about 30 distinct proteins. In terms of tissue distribution, widely expressed (at protein liver).

It localises to the mitochondrion. In terms of biological role, required for mitochondrial translation, plays a role in maintaining the stability of the small ribosomal subunit and the 12S rRNA that are required for mitoribosome formation. In Mus musculus (Mouse), this protein is Small ribosomal subunit protein mS34 (Mrps34).